A 541-amino-acid polypeptide reads, in one-letter code: Chaperonin GroEL (541 aa).

ATP is bound by residues 29–32 (TLGP), 86–90 (DGTTT), glycine 413, 476–478 (NAA), and aspartate 492. Residues 521-541 (KPEENAPAAPAAPNPGMGGMM) form a disordered region. Low complexity predominate over residues 525-535 (NAPAAPAAPNP).

The protein belongs to the chaperonin (HSP60) family. As to quaternary structure, forms a cylinder of 14 subunits composed of two heptameric rings stacked back-to-back. Interacts with the co-chaperonin GroES.

It is found in the cytoplasm. The enzyme catalyses ATP + H2O + a folded polypeptide = ADP + phosphate + an unfolded polypeptide.. Functionally, together with its co-chaperonin GroES, plays an essential role in assisting protein folding. The GroEL-GroES system forms a nano-cage that allows encapsulation of the non-native substrate proteins and provides a physical environment optimized to promote and accelerate protein folding. The sequence is that of Chaperonin GroEL from Lactiplantibacillus plantarum (strain ATCC BAA-793 / NCIMB 8826 / WCFS1) (Lactobacillus plantarum).